A 788-amino-acid chain; its full sequence is Pre-rRNA-processing protein TSR1 homolog (788 aa).

Positions 1–40 (MSTTGHRAGVFKKPAKPHKSWKGKRTKGEITTENRGREGV) are disordered. Residues 9-25 (GVFKKPAKPHKSWKGKR) are compositionally biased toward basic residues. Residues 26 to 40 (TKGEITTENRGREGV) show a composition bias toward basic and acidic residues. The Bms1-type G domain maps to 83-243 (APCLVTILSL…LRTLNETKKK (161 aa)). A disordered region spans residues 354–433 (LEEADKEMRR…ASEMMFHDEI (80 aa)). Over residues 378-412 (DDSEDDEDEEDEDEDMDDEEEDKDLEEDDEEEDTP) the composition is skewed to acidic residues.

It belongs to the TRAFAC class translation factor GTPase superfamily. Bms1-like GTPase family. TSR1 subfamily.

Its subcellular location is the nucleus. The protein resides in the nucleolus. Required during maturation of the 40S ribosomal subunit in the nucleolus. This chain is Pre-rRNA-processing protein TSR1 homolog, found in Caenorhabditis briggsae.